A 752-amino-acid chain; its full sequence is Exocyst complex component EXO84B (752 aa).

2 disordered regions span residues 511–532 and 724–752; these read QTGQ…NPEQ and TKGN…HGSY. The segment covering 515–532 has biased composition (basic and acidic residues); it reads RTDDLRRPLDRQNRNPEQ. Residues 733 to 752 are compositionally biased toward low complexity; sequence SPTASVSAQSVSSARSHGSY.

It belongs to the EXO84 family. As to quaternary structure, the exocyst complex is composed of SEC3, SEC5, SEC6, SEC8, SEC10, EXO70A1 and EXO84B. Interacts with SEC6, SEC10, SEC15B and EXO70A1. Interacts with EXO70B1. Binds directly to B1L.

The protein resides in the cytoplasm. It localises to the cytosol. Its subcellular location is the perinuclear region. It is found in the cytoskeleton. The protein localises to the phragmoplast. The protein resides in the secreted. It localises to the cell wall. Its subcellular location is the cell membrane. Component of the exocyst complex involved in the docking of exocytic vesicles with fusion sites on the plasma membrane during regulated or polarized secretion. Involved in polarized cell growth and organ morphogenesis. During cytokinesis, involved in cell plate initiation, cell plate maturation and formation of new primary cell wall. Probable component of an exocyst subcomplex specifically involved in autophagy-related, Golgi-independent membrane traffic to the vacuole. Regulates autophagosome formation and autophagy-related Golgi-independent import into the vacuole. Mediates ABCG36/PEN3 outer-membrane polarity at the periphery of lateral root cap and root epidermal cells. The sequence is that of Exocyst complex component EXO84B from Arabidopsis thaliana (Mouse-ear cress).